The primary structure comprises 103 residues: Methanol dehydrogenase [cytochrome c] subunit 2 (103 aa).

An N-terminal signal peptide occupies residues 1–20; it reads MKRILTLTVAALALGTPALA. Cysteines 26 and 32 form a disulfide.

The protein belongs to the methanol dehydrogenase subunit 2 family. Heterotetramer composed of 2 alpha and 2 beta subunits.

The protein localises to the periplasm. The catalysed reaction is 2 Fe(III)-[cytochrome cL] + a primary alcohol = 2 Fe(II)-[cytochrome cL] + an aldehyde + 2 H(+). Functionally, catalyzes the oxidation of primary alcohols including methanol. This is Methanol dehydrogenase [cytochrome c] subunit 2 (moxI) from Paracoccus denitrificans.